Reading from the N-terminus, the 561-residue chain is Asparagine synthetase [glutamine-hydrolyzing] (561 aa).

The active-site For GATase activity is cysteine 2. Positions 2–191 (CGIWALFGSD…PGHYEVLDLK (190 aa)) constitute a Glutamine amidotransferase type-2 domain. L-glutamine contacts are provided by residues 49–53 (RLAVV), 75–77 (NGE), and aspartate 97. The region spanning 213-536 (HALYDNVEKL…PGRADWLSHY (324 aa)) is the Asparagine synthetase domain. ATP is bound by residues leucine 256, isoleucine 288, and 363–364 (SG). Lysine 385 is modified (N6-acetyllysine). At threonine 545 the chain carries Phosphothreonine. The residue at position 557 (serine 557) is a Phosphoserine.

It catalyses the reaction L-aspartate + L-glutamine + ATP + H2O = L-asparagine + L-glutamate + AMP + diphosphate + H(+). The protein operates within amino-acid biosynthesis; L-asparagine biosynthesis; L-asparagine from L-aspartate (L-Gln route): step 1/1. This Homo sapiens (Human) protein is Asparagine synthetase [glutamine-hydrolyzing] (ASNS).